Here is a 215-residue protein sequence, read N- to C-terminus: Porin MspC (215 aa).

Residues Met-1–Ala-31 form the signal peptide.

It belongs to the mycobacterial porin (TC 1.B.24) family. In terms of assembly, octamers. Probably forms a goblet with the wide end on the exterior of the outer membrane and a central channel. It is not known if mixed oligomers of MspC with other Msp subunits form in vivo.

It is found in the cell outer membrane. The protein resides in the secreted. Its subcellular location is the cell wall. In terms of biological role, a constitutively expressed secondary porin, forms a water-filled channel which favors the permeation of cations and less efficiently phosphate. There are about 2400 porins in wild-type, 800 in an mspA deletion and 150 in a double mspA-mspC deletion. This Mycolicibacterium smegmatis (strain ATCC 700084 / mc(2)155) (Mycobacterium smegmatis) protein is Porin MspC (mspC).